The following is a 304-amino-acid chain: Ribonuclease BN (304 aa).

Residues His-63, His-65, Asp-67, His-68, His-140, Asp-211, and His-269 each contribute to the Zn(2+) site. Asp-67 serves as the catalytic Proton acceptor.

This sequence belongs to the RNase Z family. RNase BN subfamily. As to quaternary structure, homodimer. Zn(2+) serves as cofactor.

Zinc phosphodiesterase, which has both exoribonuclease and endoribonuclease activities. The protein is Ribonuclease BN of Cronobacter sakazakii (strain ATCC BAA-894) (Enterobacter sakazakii).